The following is a 489-amino-acid chain: Glycogen synthase (489 aa).

Residue K15 participates in ADP-alpha-D-glucose binding.

It belongs to the glycosyltransferase 1 family. Bacterial/plant glycogen synthase subfamily.

The catalysed reaction is [(1-&gt;4)-alpha-D-glucosyl](n) + ADP-alpha-D-glucose = [(1-&gt;4)-alpha-D-glucosyl](n+1) + ADP + H(+). It functions in the pathway glycan biosynthesis; glycogen biosynthesis. Its function is as follows. Synthesizes alpha-1,4-glucan chains using ADP-glucose. This chain is Glycogen synthase, found in Francisella tularensis subsp. novicida (strain U112).